A 73-amino-acid chain; its full sequence is UPF0435 protein lin1819 (73 aa).

Belongs to the UPF0435 family.

This Listeria innocua serovar 6a (strain ATCC BAA-680 / CLIP 11262) protein is UPF0435 protein lin1819.